We begin with the raw amino-acid sequence, 294 residues long: ATP synthase gamma chain (294 aa).

It belongs to the ATPase gamma chain family. In terms of assembly, F-type ATPases have 2 components, CF(1) - the catalytic core - and CF(0) - the membrane proton channel. CF(1) has five subunits: alpha(3), beta(3), gamma(1), delta(1), epsilon(1). CF(0) has three main subunits: a, b and c.

The protein resides in the cell inner membrane. Its function is as follows. Produces ATP from ADP in the presence of a proton gradient across the membrane. The gamma chain is believed to be important in regulating ATPase activity and the flow of protons through the CF(0) complex. In Campylobacter jejuni subsp. jejuni serotype O:2 (strain ATCC 700819 / NCTC 11168), this protein is ATP synthase gamma chain.